The following is a 355-amino-acid chain: Methyltransferase FUS9 (355 aa).

Tyr-18, Asn-63, Asp-86, Ser-123, and Phe-124 together coordinate S-adenosyl-L-homocysteine. Position 231 (Phe-231) interacts with Mg(2+).

Belongs to the methyltransferase superfamily. Type-7 methyltransferase family. The cofactor is Mg(2+).

It functions in the pathway mycotoxin biosynthesis. Functionally, methyltransferase; part of the gene cluster that mediates the biosynthesis of the mycotoxin fusarin C. Within the cluster, FUS1, FUS2, FUS8 and FUS9 are sufficient for fusarin production. The roles of the other FUS members are yet undetermined. The fusarin C synthetase FUS1 is responsible for the condensation of one acetyl-coenzyme A (CoA) unit with six malonyl-CoA units and the amide linkage of the arising heptaketide and homoserine, subsequently releasing the first intermediate, prefusarin, as an alcohol with an open ring structure. The cytochrome P450 monooxygenase FUS8 participates in multiple oxidation processes at carbon C-20 and is able to use the FUS1 product as substrate, resulting in formation of 20-hydroxy-prefusarin. This reaction seems to be essential before the 2-pyrrolidone ring closure can be catalyzed by FUS2, generating 20-hydroxy-fusarin. FUS8 is able to further oxidizes carbon C-20 after ring closure, resulting in the formation of carboxy-fusarin C. As the last step, FUS9 methylates the hydroxyl group at C-21 to generate fusarin C. Fusarin C can then rearrange to epi-fusarin C, the (z)-isomers, and fusarin A and fusarin D. The sequence is that of Methyltransferase FUS9 from Gibberella moniliformis (strain M3125 / FGSC 7600) (Maize ear and stalk rot fungus).